An 807-amino-acid polypeptide reads, in one-letter code: Glycerol-3-phosphate acyltransferase (807 aa).

An HXXXXD motif motif is present at residues 308–313; that stretch reads CHRSHM.

It belongs to the GPAT/DAPAT family.

It localises to the cell inner membrane. The enzyme catalyses sn-glycerol 3-phosphate + an acyl-CoA = a 1-acyl-sn-glycero-3-phosphate + CoA. It functions in the pathway phospholipid metabolism; CDP-diacylglycerol biosynthesis; CDP-diacylglycerol from sn-glycerol 3-phosphate: step 1/3. The polypeptide is Glycerol-3-phosphate acyltransferase (Shewanella baltica (strain OS155 / ATCC BAA-1091)).